A 380-amino-acid chain; its full sequence is Cytochrome b (380 aa).

A run of 4 helical transmembrane segments spans residues 33–53 (FGSL…FLAM), 77–98 (WLIR…YLHV), 113–133 (WNIG…GYVL), and 178–198 (FFAF…IHLL). Positions 83 and 97 each coordinate heme b. Positions 182 and 196 each coordinate heme b. His201 serves as a coordination point for a ubiquinone. 4 helical membrane passes run 226–246 (YKDL…ALFS), 288–308 (LGGV…PMLH), 320–340 (LSQI…WIGG), and 347–367 (FVLI…IALP).

This sequence belongs to the cytochrome b family. The cytochrome bc1 complex contains 3 respiratory subunits (MT-CYB, CYC1 and UQCRFS1), 2 core proteins (UQCRC1 and UQCRC2) and probably 6 low-molecular weight proteins. The cofactor is heme b.

Its subcellular location is the mitochondrion inner membrane. In terms of biological role, component of the ubiquinol-cytochrome c reductase complex (complex III or cytochrome b-c1 complex) that is part of the mitochondrial respiratory chain. The b-c1 complex mediates electron transfer from ubiquinol to cytochrome c. Contributes to the generation of a proton gradient across the mitochondrial membrane that is then used for ATP synthesis. The polypeptide is Cytochrome b (mt-cyb) (Acipenser transmontanus (White sturgeon)).